The chain runs to 283 residues: Protein-L-isoaspartate O-methyltransferase (283 aa).

Serine 122 is an active-site residue.

Belongs to the methyltransferase superfamily. L-isoaspartyl/D-aspartyl protein methyltransferase family.

It is found in the cytoplasm. It carries out the reaction [protein]-L-isoaspartate + S-adenosyl-L-methionine = [protein]-L-isoaspartate alpha-methyl ester + S-adenosyl-L-homocysteine. Its function is as follows. Catalyzes the methyl esterification of L-isoaspartyl residues in peptides and proteins that result from spontaneous decomposition of normal L-aspartyl and L-asparaginyl residues. It plays a role in the repair and/or degradation of damaged proteins. The chain is Protein-L-isoaspartate O-methyltransferase from Leptothrix cholodnii (strain ATCC 51168 / LMG 8142 / SP-6) (Leptothrix discophora (strain SP-6)).